Reading from the N-terminus, the 187-residue chain is uncharacterized protein (187 aa).

The chain crosses the membrane as a helical span at residues 8-28 (FFILLAINFILAAGFVALVLL).

The protein resides in the membrane. This is an uncharacterized protein from Bacillus subtilis (strain 168).